Here is a 195-residue protein sequence, read N- to C-terminus: Inner membrane protein YohC (195 aa).

Topologically, residues 1–32 (MSHVWGLFSHPDREMQVINRENETISHHYTHH) are cytoplasmic. Residues 33-55 (VLLMAAIPVICAFIGTTQIGWNF) form a helical membrane-spanning segment. Topologically, residues 56–64 (GDGTILKLS) are periplasmic. The helical transmembrane segment at 65 to 87 (WFTGLALAVLFYGVMLAGVAVMG) threads the bilayer. Over 88–107 (RVIWWMARNYPQRPSLAHCM) the chain is Cytoplasmic. The helical transmembrane segment at 108–130 (VFAGYVATPLFLSGLVALYPLVW) threads the bilayer. Residues 131 to 134 (LCAL) are Periplasmic-facing. Residues 135 to 157 (VGTVALFYTGYLLYLGIPSFLNI) traverse the membrane as a helical segment. At 158-169 (NKEEGLSFSSST) the chain is on the cytoplasmic side. The helical transmembrane segment at 170-192 (LAIGVLVLEVLLALTVILWGYGY) threads the bilayer. Residues 193–195 (RLF) are Periplasmic-facing.

The protein resides in the cell inner membrane. This is Inner membrane protein YohC (yohC) from Escherichia coli O6:H1 (strain CFT073 / ATCC 700928 / UPEC).